We begin with the raw amino-acid sequence, 398 residues long: 1-deoxy-D-xylulose 5-phosphate reductoisomerase (398 aa).

T10, G11, S12, I13, G36, R37, N38, and N124 together coordinate NADPH. A 1-deoxy-D-xylulose 5-phosphate-binding site is contributed by K125. E126 contributes to the NADPH binding site. Position 150 (D150) interacts with Mn(2+). Residues S151, E152, S186, and H209 each contribute to the 1-deoxy-D-xylulose 5-phosphate site. A Mn(2+)-binding site is contributed by E152. An NADPH-binding site is contributed by G215. Residues S222, N227, K228, and E231 each coordinate 1-deoxy-D-xylulose 5-phosphate. E231 is a binding site for Mn(2+).

Belongs to the DXR family. In terms of assembly, homodimer. Mg(2+) serves as cofactor. The cofactor is Mn(2+).

It catalyses the reaction 2-C-methyl-D-erythritol 4-phosphate + NADP(+) = 1-deoxy-D-xylulose 5-phosphate + NADPH + H(+). It participates in isoprenoid biosynthesis; isopentenyl diphosphate biosynthesis via DXP pathway; isopentenyl diphosphate from 1-deoxy-D-xylulose 5-phosphate: step 1/6. Its function is as follows. Catalyzes the NADPH-dependent rearrangement and reduction of 1-deoxy-D-xylulose-5-phosphate (DXP) to 2-C-methyl-D-erythritol 4-phosphate (MEP). The protein is 1-deoxy-D-xylulose 5-phosphate reductoisomerase of Yersinia enterocolitica serotype O:8 / biotype 1B (strain NCTC 13174 / 8081).